Reading from the N-terminus, the 134-residue chain is MEKSLHLEIVTPDRLVLSEKVDYVGAPGYEGEFGILPNHIPFLSALNIGSLYYKAGGKTHWIFVSGGFAEVSDNKVTVLAESAERAEDIDLERARKAKERAEQRLAQAKEKLDSARAQAALQRAMARMRVRGAA.

It belongs to the ATPase epsilon chain family. In terms of assembly, F-type ATPases have 2 components, CF(1) - the catalytic core - and CF(0) - the membrane proton channel. CF(1) has five subunits: alpha(3), beta(3), gamma(1), delta(1), epsilon(1). CF(0) has three main subunits: a, b and c.

The protein localises to the cell inner membrane. Functionally, produces ATP from ADP in the presence of a proton gradient across the membrane. This chain is ATP synthase epsilon chain, found in Nitratidesulfovibrio vulgaris (strain DSM 19637 / Miyazaki F) (Desulfovibrio vulgaris).